The following is a 429-amino-acid chain: Glutamate-1-semialdehyde 2,1-aminomutase (429 aa).

K267 is subject to N6-(pyridoxal phosphate)lysine.

It belongs to the class-III pyridoxal-phosphate-dependent aminotransferase family. HemL subfamily. As to quaternary structure, homodimer. Pyridoxal 5'-phosphate is required as a cofactor.

Its subcellular location is the cytoplasm. The enzyme catalyses (S)-4-amino-5-oxopentanoate = 5-aminolevulinate. It participates in porphyrin-containing compound metabolism; protoporphyrin-IX biosynthesis; 5-aminolevulinate from L-glutamyl-tRNA(Glu): step 2/2. The chain is Glutamate-1-semialdehyde 2,1-aminomutase from Xanthomonas oryzae pv. oryzae (strain MAFF 311018).